A 383-amino-acid chain; its full sequence is S-adenosylmethionine synthase (383 aa).

His-22 contributes to the ATP binding site. Asp-24 is a binding site for Mg(2+). Residue Glu-50 coordinates K(+). Glu-63 and Gln-99 together coordinate L-methionine. Residues 99–109 (QSSEINQAVQS) are flexible loop. ATP contacts are provided by residues 160 to 162 (DMK), Asp-235, 241 to 242 (RK), Ser-258, and Lys-262. Position 235 (Asp-235) interacts with L-methionine. Lys-266 is a binding site for L-methionine.

This sequence belongs to the AdoMet synthase family. In terms of assembly, homotetramer; dimer of dimers. Mg(2+) is required as a cofactor. The cofactor is K(+).

The protein localises to the cytoplasm. It carries out the reaction L-methionine + ATP + H2O = S-adenosyl-L-methionine + phosphate + diphosphate. The protein operates within amino-acid biosynthesis; S-adenosyl-L-methionine biosynthesis; S-adenosyl-L-methionine from L-methionine: step 1/1. In terms of biological role, catalyzes the formation of S-adenosylmethionine (AdoMet) from methionine and ATP. The overall synthetic reaction is composed of two sequential steps, AdoMet formation and the subsequent tripolyphosphate hydrolysis which occurs prior to release of AdoMet from the enzyme. The chain is S-adenosylmethionine synthase from Mycoplasma pneumoniae (strain ATCC 29342 / M129 / Subtype 1) (Mycoplasmoides pneumoniae).